The primary structure comprises 362 residues: Nuclear hormone receptor family member nhr-77 (362 aa).

The nuclear receptor DNA-binding region spans 8–82 (DPICPVCEFP…AGMKRNLVKQ (75 aa)). 2 consecutive NR C4-type zinc fingers follow at residues 11 to 32 (CPVC…CGAC) and 48 to 69 (CEKN…FDYC). Residues 145-362 (EAEKDVSKIL…KLYIQLGLPF (218 aa)) enclose the NR LBD domain.

Belongs to the nuclear hormone receptor family.

The protein localises to the nucleus. Its function is as follows. Orphan nuclear receptor. This chain is Nuclear hormone receptor family member nhr-77 (nhr-77), found in Caenorhabditis elegans.